We begin with the raw amino-acid sequence, 269 residues long: 1-(5-phosphoribosyl)-5-[(5-phosphoribosylamino)methylideneamino] imidazole-4-carboxamide isomerase (269 aa).

Asp-10 (proton acceptor) is an active-site residue. Catalysis depends on Asp-132, which acts as the Proton donor.

Belongs to the HisA/HisF family.

The protein localises to the cytoplasm. The catalysed reaction is 1-(5-phospho-beta-D-ribosyl)-5-[(5-phospho-beta-D-ribosylamino)methylideneamino]imidazole-4-carboxamide = 5-[(5-phospho-1-deoxy-D-ribulos-1-ylimino)methylamino]-1-(5-phospho-beta-D-ribosyl)imidazole-4-carboxamide. Its pathway is amino-acid biosynthesis; L-histidine biosynthesis; L-histidine from 5-phospho-alpha-D-ribose 1-diphosphate: step 4/9. The polypeptide is 1-(5-phosphoribosyl)-5-[(5-phosphoribosylamino)methylideneamino] imidazole-4-carboxamide isomerase (Xylella fastidiosa (strain M12)).